The primary structure comprises 201 residues: dITP/XTP pyrophosphatase (201 aa).

Thr7 to Lys12 is a binding site for substrate. Residues Glu40 and Asp69 each coordinate Mg(2+). Residue Asp69 is the Proton acceptor of the active site. Substrate contacts are provided by residues Ser70, Phe152–Asp155, Lys175, and His180–Arg181.

Belongs to the HAM1 NTPase family. As to quaternary structure, homodimer. Mg(2+) serves as cofactor.

The catalysed reaction is XTP + H2O = XMP + diphosphate + H(+). The enzyme catalyses dITP + H2O = dIMP + diphosphate + H(+). It carries out the reaction ITP + H2O = IMP + diphosphate + H(+). Functionally, pyrophosphatase that catalyzes the hydrolysis of nucleoside triphosphates to their monophosphate derivatives, with a high preference for the non-canonical purine nucleotides XTP (xanthosine triphosphate), dITP (deoxyinosine triphosphate) and ITP. Seems to function as a house-cleaning enzyme that removes non-canonical purine nucleotides from the nucleotide pool, thus preventing their incorporation into DNA/RNA and avoiding chromosomal lesions. The polypeptide is dITP/XTP pyrophosphatase (Desulforamulus reducens (strain ATCC BAA-1160 / DSM 100696 / MI-1) (Desulfotomaculum reducens)).